The chain runs to 308 residues: 1-acyl-sn-glycerol-3-phosphate acyltransferase (308 aa).

3 helical membrane passes run 65 to 85 (FLSM…LLPW), 124 to 144 (AIYI…WLIP), and 148 to 168 (VTIA…YVLA). An HXXXXD motif motif is present at residues 130-135 (HASLVD).

Belongs to the 1-acyl-sn-glycerol-3-phosphate acyltransferase family.

Its subcellular location is the membrane. The enzyme catalyses a 1-acyl-sn-glycero-3-phosphate + an acyl-CoA = a 1,2-diacyl-sn-glycero-3-phosphate + CoA. Converts lysophosphatidic acid (LPA) into phosphatidic acid by incorporating acyl moiety at the 2 position. This enzyme shows a preference for medium-chain-length fatty acyl-coenzyme a substrates. The protein is 1-acyl-sn-glycerol-3-phosphate acyltransferase of Cocos nucifera (Coconut palm).